We begin with the raw amino-acid sequence, 122 residues long: Large ribosomal subunit protein uL14 (122 aa).

The protein belongs to the universal ribosomal protein uL14 family. In terms of assembly, part of the 50S ribosomal subunit. Forms a cluster with proteins L3 and L19. In the 70S ribosome, L14 and L19 interact and together make contacts with the 16S rRNA in bridges B5 and B8.

In terms of biological role, binds to 23S rRNA. Forms part of two intersubunit bridges in the 70S ribosome. The protein is Large ribosomal subunit protein uL14 of Xanthomonas oryzae pv. oryzae (strain MAFF 311018).